The chain runs to 467 residues: A-type ATP synthase subunit B (467 aa).

Positions 95–114 (GKGQPRDHMPLPPPEDFRDV) are disordered.

The protein belongs to the ATPase alpha/beta chains family. As to quaternary structure, has multiple subunits with at least A(3), B(3), C, D, E, F, H, I and proteolipid K(x).

It is found in the cell membrane. Functionally, component of the A-type ATP synthase that produces ATP from ADP in the presence of a proton gradient across the membrane. The B chain is a regulatory subunit. This is A-type ATP synthase subunit B from Pyrobaculum neutrophilum (strain DSM 2338 / JCM 9278 / NBRC 100436 / V24Sta) (Thermoproteus neutrophilus).